The chain runs to 404 residues: Imidazolonepropionase (404 aa).

Fe(3+) is bound by residues H73 and H75. Zn(2+) contacts are provided by H73 and H75. 3 residues coordinate 4-imidazolone-5-propanoate: R82, Y145, and H178. N-formimidoyl-L-glutamate is bound at residue Y145. A Fe(3+)-binding site is contributed by H243. H243 lines the Zn(2+) pocket. Residue Q246 participates in 4-imidazolone-5-propanoate binding. Position 318 (D318) interacts with Fe(3+). D318 lines the Zn(2+) pocket. N-formimidoyl-L-glutamate contacts are provided by N320 and G322. A 4-imidazolone-5-propanoate-binding site is contributed by S323.

It belongs to the metallo-dependent hydrolases superfamily. HutI family. Requires Zn(2+) as cofactor. The cofactor is Fe(3+).

It is found in the cytoplasm. The enzyme catalyses 4-imidazolone-5-propanoate + H2O = N-formimidoyl-L-glutamate. It participates in amino-acid degradation; L-histidine degradation into L-glutamate; N-formimidoyl-L-glutamate from L-histidine: step 3/3. Its function is as follows. Catalyzes the hydrolytic cleavage of the carbon-nitrogen bond in imidazolone-5-propanoate to yield N-formimidoyl-L-glutamate. It is the third step in the universal histidine degradation pathway. The protein is Imidazolonepropionase of Bradyrhizobium sp. (strain BTAi1 / ATCC BAA-1182).